The sequence spans 643 residues: Nucleolar GTP-binding protein 1 (643 aa).

The OBG-type G domain maps to 168-340; it reads RTLLICGYPN…VRNKACEKLL (173 aa). GTP is bound by residues 174 to 181, 220 to 224, and 288 to 291; these read GYPNVGKS, DTPGI, and NKTD. Residues 568–643 are disordered; sequence GDQEDSAPAG…KRGVGKTDFR (76 aa). Residues 594-622 show a composition bias toward basic and acidic residues; sequence MRSKAERMAKLERRERNRMARAGESDRHA.

This sequence belongs to the TRAFAC class OBG-HflX-like GTPase superfamily. OBG GTPase family. NOG subfamily.

The protein resides in the nucleus. The protein localises to the nucleolus. In terms of biological role, involved in the biogenesis of the 60S ribosomal subunit. The sequence is that of Nucleolar GTP-binding protein 1 (NOG1) from Kluyveromyces lactis (strain ATCC 8585 / CBS 2359 / DSM 70799 / NBRC 1267 / NRRL Y-1140 / WM37) (Yeast).